Here is a 184-residue protein sequence, read N- to C-terminus: Photosystem I assembly protein Ycf4 (184 aa).

A run of 2 helical transmembrane segments spans residues 19–39 and 57–77; these read ISNFCWALILFLGSLGFLLVG and IIFFPQGIVMSFYGIAGLFIS.

The protein belongs to the Ycf4 family.

The protein localises to the plastid. It is found in the chloroplast thylakoid membrane. Functionally, seems to be required for the assembly of the photosystem I complex. This is Photosystem I assembly protein Ycf4 from Solanum bulbocastanum (Wild potato).